The chain runs to 658 residues: Threonine--tRNA ligase (658 aa).

The TGS domain maps to 1 to 64 (MSCSVSLSFP…GQSGQIEIIT (64 aa)). Residues 246-549 (DHRRLGREMD…LIENFAGHMP (304 aa)) are catalytic. Zn(2+) is bound by residues Cys343, His394, and His526.

The protein belongs to the class-II aminoacyl-tRNA synthetase family. Homodimer. Requires Zn(2+) as cofactor.

It localises to the cytoplasm. It carries out the reaction tRNA(Thr) + L-threonine + ATP = L-threonyl-tRNA(Thr) + AMP + diphosphate + H(+). Catalyzes the attachment of threonine to tRNA(Thr) in a two-step reaction: L-threonine is first activated by ATP to form Thr-AMP and then transferred to the acceptor end of tRNA(Thr). Also edits incorrectly charged L-seryl-tRNA(Thr). The sequence is that of Threonine--tRNA ligase from Bartonella quintana (strain Toulouse) (Rochalimaea quintana).